A 70-amino-acid polypeptide reads, in one-letter code: Melittin (70 aa).

The signal sequence occupies residues 1-21 (MKFLVNVALVFMVVYISFIYA). A propeptide spans 22–43 (APEPEPAPEAEAEADAEADPEA) (removed by a dipeptidylpeptidase). G44 carries the N-formylglycine; partial modification. Q69 bears the Glutamine amide mark.

Belongs to the melittin family. In terms of assembly, monomer (in solution and for integration into membranes), homotetramer (in solution and potentially as a toroidal pore in membranes), and potenially homomultimer (as a toroidal pore in membranes). In terms of tissue distribution, expressed by the venom gland.

The protein resides in the secreted. The protein localises to the target cell membrane. Functionally, main toxin of bee venom with strong hemolytic activity and antimicrobial activity. It has enhancing effects on bee venom phospholipase A2 activity. This amphipathic toxin binds to negatively charged membrane surface and forms pore by inserting into lipid bilayers inducing the leakage of ions and molecules and the enhancement of permeability that ultimately leads to cell lysis. It acts as a voltage-gated pore with higher selectivity for anions over cations. The ion conductance has been shown to be voltage-dependent. Self-association of melittin in membranes is promoted by high ionic strength, but not by the presence of negatively charged lipids. In vivo, intradermal injection into healthy human volunteers produce sharp pain sensation and an inflammatory response. It produces pain by activating primary nociceptor cells directly and indirectly due to its ability to activate plasma membrane phospholipase A2 and its pore-forming activity. This Apis cerana cerana (Oriental honeybee) protein is Melittin (MELT).